A 148-amino-acid chain; its full sequence is Protein H2A.6 (148 aa).

The tract at residues 120 to 148 is disordered; the sequence is GAAEKESTKSPKKKAATKSPKKKTAATKE. 2 short sequence motifs (SPKK motif) span residues 129-132 and 138-141; these read SPKK. Residues 129–148 are compositionally biased toward basic residues; it reads SPKKKAATKSPKKKTAATKE.

Belongs to the histone H2A family. As to quaternary structure, the nucleosome is a histone octamer containing two molecules each of H2A, H2B, H3 and H4 assembled in one H3-H4 heterotetramer and two H2A-H2B heterodimers. The octamer wraps approximately 147 bp of DNA. As to expression, abundant in meristematic tissues.

The protein localises to the nucleus. Its subcellular location is the chromosome. Its function is as follows. Core component of nucleosome. Nucleosomes wrap and compact DNA into chromatin, limiting DNA accessibility to the cellular machineries which require DNA as a template. Histones thereby play a central role in transcription regulation, DNA repair, DNA replication and chromosomal stability. DNA accessibility is regulated via a complex set of post-translational modifications of histones, also called histone code, and nucleosome remodeling. The sequence is that of Protein H2A.6 (H2A-3) from Triticum aestivum (Wheat).